We begin with the raw amino-acid sequence, 406 residues long: MAAELTSTKLNAENHLLLDQPLLRLPHELARRNLKSFQRIVEREKEYVLPALKEAAKASMSGNQTPEQTLATLDVMISRMQGLKRKMENLQQEEKKIHHQSRKRIQHLNQLYQIPSLTDVKYDQWSRVRLDRLVIDHMLRSGYSESAQRLARAKNIEELVDLNVFVQCQRIAESLRNGETKDALQWCNENKAALKKSQYNLEFELRLQQYIEMIRTRDRAKFVDAMVHARRYLAPYDETQSAEIRRAAGLLAFPPNTRAEPYKSMYASERWVYLSELFIRTHHELLSLPSRPLMHIALSAGLSALKTPACHSAYTSSSSNSHSTATSVCPICSTELNELARNLPYANHTKSSVENDPVVLPNGRVYGLHRLLDMSKKLSSLEAGKVRDPTTGEIFNESELKKVYIM.

Residues 126–158 (SRVRLDRLVIDHMLRSGYSESAQRLARAKNIEE) enclose the LisH domain. The 58-residue stretch at 164-221 (VFVQCQRIAESLRNGETKDALQWCNENKAALKKSQYNLEFELRLQQYIEMIRTRDRAK) folds into the CTLH domain. The RING-Gid-type zinc finger occupies 329-391 (CPICSTELNE…EAGKVRDPTT (63 aa)).

The protein belongs to the FYV10 family.

It is found in the cytoplasm. The protein resides in the nucleus. Its function is as follows. Involved in the proteasome-dependent degradation of fructose-1,6-bisphosphatase. This is Protein fyv10 (fyv10) from Emericella nidulans (strain FGSC A4 / ATCC 38163 / CBS 112.46 / NRRL 194 / M139) (Aspergillus nidulans).